A 236-amino-acid polypeptide reads, in one-letter code: Phosphoglycolate phosphatase (236 aa).

Residue Asp14 is the Nucleophile of the active site. Mg(2+)-binding residues include Asp14, Asp16, and Asp177.

Belongs to the HAD-like hydrolase superfamily. CbbY/CbbZ/Gph/YieH family. The cofactor is Mg(2+).

The catalysed reaction is 2-phosphoglycolate + H2O = glycolate + phosphate. The protein operates within organic acid metabolism; glycolate biosynthesis; glycolate from 2-phosphoglycolate: step 1/1. Specifically catalyzes the dephosphorylation of 2-phosphoglycolate. Is involved in the dissimilation of the intracellular 2-phosphoglycolate formed during the DNA repair of 3'-phosphoglycolate ends, a major class of DNA lesions induced by oxidative stress. The polypeptide is Phosphoglycolate phosphatase (Neisseria gonorrhoeae (strain ATCC 700825 / FA 1090)).